Reading from the N-terminus, the 196-residue chain is Carnitine operon protein CaiE (196 aa).

The disordered stretch occupies residues 173 to 196 (TQPLRQMEENRPRLQGTTDVTPKR). Residues 187 to 196 (QGTTDVTPKR) are compositionally biased toward polar residues.

This sequence belongs to the transferase hexapeptide repeat family.

The protein operates within amine and polyamine metabolism; carnitine metabolism. Functionally, overproduction of CaiE stimulates the activity of CaiB and CaiD. In Escherichia coli O127:H6 (strain E2348/69 / EPEC), this protein is Carnitine operon protein CaiE.